Consider the following 35-residue polypeptide: Conotoxin Cal6.1c (35 aa).

A propeptide spanning residues 1–35 (GLNRPSKRCLAGSAPCEFHKRSTCCSGHCIIWWCA) is cleaved from the precursor. Intrachain disulfides connect cysteine 9–cysteine 25, cysteine 16–cysteine 29, and cysteine 24–cysteine 34.

It belongs to the conotoxin O1 superfamily. As to expression, expressed by the venom duct.

It localises to the secreted. In terms of biological role, probable neurotoxin with unknown target. Possibly targets ion channels. This Californiconus californicus (California cone) protein is Conotoxin Cal6.1c.